Reading from the N-terminus, the 845-residue chain is Extended synaptotagmin-2 (845 aa).

Over residues 1–17 the composition is skewed to gly residues; that stretch reads MSSAGGEGPEAGPGRAG. The segment at 1-26 is disordered; it reads MSSAGGEGPEAGPGRAGGRSEPEAPG. Residues 1–27 lie on the Cytoplasmic side of the membrane; that stretch reads MSSAGGEGPEAGPGRAGGRSEPEAPGS. The helical transmembrane segment at 28 to 48 threads the bilayer; sequence ALSVDLPGLLGQLARSFALLL. Residues 49–51 are Lumenal-facing; it reads PVY. A helical transmembrane segment spans residues 52–72; the sequence is ALGYLGLSFSWVLLALGLLAW. Topologically, residues 73-845 are cytoplasmic; that stretch reads CRRSRGLKAS…EDGTRPQVIT (773 aa). The 180-residue stretch at 115-294 folds into the SMP-LTD domain; sequence DTERAEWLNK…LPNRITVPLV (180 aa). C2 domains are found at residues 293 to 413 and 442 to 563; these read LVSE…DEWF and VLAD…QLSN. Residues lysine 324, aspartate 325, aspartate 337, aspartate 384, glutamate 385, aspartate 386, aspartate 388, aspartate 390, and aspartate 391 each contribute to the Ca(2+) site. The interval 584 to 664 is disordered; sequence QERPPDYQHS…RDLGRSSSSL (81 aa). Polar residues predominate over residues 612-628; the sequence is SQMSASPGTGGANTAPS. 2 positions are modified to phosphoserine: serine 615 and serine 617. The residue at position 629 (threonine 629) is a Phosphothreonine. Over residues 634-645 the composition is skewed to basic and acidic residues; it reads VDDKPAMEEKPQ. 7 positions are modified to phosphoserine: serine 660, serine 662, serine 663, serine 667, serine 679, serine 682, and serine 685. Positions 710–832 constitute a C2 3 domain; the sequence is PLGQIQLTIR…ELAKGWTQWY (123 aa). Positions 757–764 are required for phosphatidylinositol 4,5-bisphosphate-dependent location at the cell membrane; sequence KRRSGRRK.

This sequence belongs to the extended synaptotagmin family. In terms of assembly, homodimer. Interacts with ESYT1 and ESYT3. Interacts with FGFR1 that has been activated by FGF1 binding. Interacts with the AP-2 complex; identified in a complex with the AP-2 complex and FGFR1.

Its subcellular location is the cell membrane. The protein localises to the endoplasmic reticulum membrane. Functionally, tethers the endoplasmic reticulum to the cell membrane and promotes the formation of appositions between the endoplasmic reticulum and the cell membrane. Binds glycerophospholipids in a barrel-like domain and may play a role in cellular lipid transport. Plays a role in FGF signaling via its role in the rapid internalization of FGFR1 that has been activated by FGF1 binding; this occurs most likely via the AP-2 complex. Promotes the localization of SACM1L at endoplasmic reticulum-plasma membrane contact sites (EPCS). The protein is Extended synaptotagmin-2 (Esyt2) of Mus musculus (Mouse).